A 201-amino-acid chain; its full sequence is Indolepyruvate oxidoreductase subunit IorB (201 aa).

Heterodimer of the IorA and IorB subunits.

It carries out the reaction indole-3-pyruvate + 2 oxidized [2Fe-2S]-[ferredoxin] + CoA = (indol-3-yl)acetyl-CoA + 2 reduced [2Fe-2S]-[ferredoxin] + CO2 + H(+). Functionally, catalyzes the ferredoxin-dependent oxidative decarboxylation of arylpyruvates. The polypeptide is Indolepyruvate oxidoreductase subunit IorB (iorB) (Archaeoglobus fulgidus (strain ATCC 49558 / DSM 4304 / JCM 9628 / NBRC 100126 / VC-16)).